The sequence spans 424 residues: Histidine--tRNA ligase (424 aa).

The protein belongs to the class-II aminoacyl-tRNA synthetase family. Homodimer.

The protein resides in the cytoplasm. The catalysed reaction is tRNA(His) + L-histidine + ATP = L-histidyl-tRNA(His) + AMP + diphosphate + H(+). The sequence is that of Histidine--tRNA ligase from Shewanella frigidimarina (strain NCIMB 400).